We begin with the raw amino-acid sequence, 108 residues long: Protein YcgL (108 aa).

In terms of domain architecture, YcgL spans 12 to 96 (MFCVIYRSSK…PPEDLLKQHL (85 aa)).

This Shigella sonnei (strain Ss046) protein is Protein YcgL.